A 148-amino-acid chain; its full sequence is Large ribosomal subunit protein uL22 (148 aa).

The protein belongs to the universal ribosomal protein uL22 family. Part of the 50S ribosomal subunit.

Its function is as follows. This protein binds specifically to 23S rRNA. It makes multiple contacts with different domains of the 23S rRNA in the assembled 50S subunit and ribosome. Functionally, the globular domain of the protein is located near the polypeptide exit tunnel on the outside of the subunit, while an extended beta-hairpin is found that lines the wall of the exit tunnel in the center of the 70S ribosome. In Thermoplasma volcanium (strain ATCC 51530 / DSM 4299 / JCM 9571 / NBRC 15438 / GSS1), this protein is Large ribosomal subunit protein uL22.